Here is a 295-residue protein sequence, read N- to C-terminus: 4-hydroxy-tetrahydrodipicolinate synthase (295 aa).

Residue threonine 47 coordinates pyruvate. Tyrosine 135 functions as the Proton donor/acceptor in the catalytic mechanism. The active-site Schiff-base intermediate with substrate is the lysine 163. Isoleucine 206 contributes to the pyruvate binding site.

The protein belongs to the DapA family. In terms of assembly, homodimer.

It localises to the cytoplasm. The catalysed reaction is L-aspartate 4-semialdehyde + pyruvate = (2S,4S)-4-hydroxy-2,3,4,5-tetrahydrodipicolinate + H2O + H(+). It functions in the pathway amino-acid biosynthesis; L-lysine biosynthesis via DAP pathway; (S)-tetrahydrodipicolinate from L-aspartate: step 3/4. Its function is as follows. Catalyzes the condensation of (S)-aspartate-beta-semialdehyde [(S)-ASA] and pyruvate to 4-hydroxy-tetrahydrodipicolinate (HTPA). This is 4-hydroxy-tetrahydrodipicolinate synthase from Staphylococcus saprophyticus subsp. saprophyticus (strain ATCC 15305 / DSM 20229 / NCIMB 8711 / NCTC 7292 / S-41).